Here is a 375-residue protein sequence, read N- to C-terminus: Lipid-A-disaccharide synthase (375 aa).

The protein belongs to the LpxB family.

The enzyme catalyses a lipid X + a UDP-2-N,3-O-bis[(3R)-3-hydroxyacyl]-alpha-D-glucosamine = a lipid A disaccharide + UDP + H(+). Its pathway is bacterial outer membrane biogenesis; LPS lipid A biosynthesis. Condensation of UDP-2,3-diacylglucosamine and 2,3-diacylglucosamine-1-phosphate to form lipid A disaccharide, a precursor of lipid A, a phosphorylated glycolipid that anchors the lipopolysaccharide to the outer membrane of the cell. This chain is Lipid-A-disaccharide synthase, found in Pseudomonas entomophila (strain L48).